Consider the following 319-residue polypeptide: tRNA uridine(34) hydroxylase (319 aa).

The Rhodanese domain occupies 125–219 (LDENTVVIDA…YGKDPEVQGD (95 aa)). Cys179 (cysteine persulfide intermediate) is an active-site residue.

This sequence belongs to the TrhO family.

It carries out the reaction uridine(34) in tRNA + AH2 + O2 = 5-hydroxyuridine(34) in tRNA + A + H2O. Functionally, catalyzes oxygen-dependent 5-hydroxyuridine (ho5U) modification at position 34 in tRNAs. The chain is tRNA uridine(34) hydroxylase from Lactococcus lactis subsp. lactis (strain IL1403) (Streptococcus lactis).